A 315-amino-acid polypeptide reads, in one-letter code: tRNA-dihydrouridine(16) synthase (315 aa).

Residues 7-9 and glutamine 68 contribute to the FMN site; that span reads PME. Cysteine 98 serves as the catalytic Proton donor. FMN-binding positions include lysine 139, 200–202, and 224–225; these read NGE and GR.

The protein belongs to the Dus family. DusC subfamily. Requires FMN as cofactor.

It carries out the reaction 5,6-dihydrouridine(16) in tRNA + NADP(+) = uridine(16) in tRNA + NADPH + H(+). The catalysed reaction is 5,6-dihydrouridine(16) in tRNA + NAD(+) = uridine(16) in tRNA + NADH + H(+). In terms of biological role, catalyzes the synthesis of 5,6-dihydrouridine (D), a modified base found in the D-loop of most tRNAs, via the reduction of the C5-C6 double bond in target uridines. DusC specifically modifies U16 in tRNAs. This is tRNA-dihydrouridine(16) synthase from Escherichia coli (strain K12).